The following is a 99-amino-acid chain: Cell division protein FtsB (99 aa).

Over 1-3 (MRV) the chain is Cytoplasmic. The chain crosses the membrane as a helical span at residues 4-21 (FTAILLILLVLLQYRLWF). The Periplasmic portion of the chain corresponds to 22–99 (GKNSVPDYLV…KENSTRNVNN (78 aa)). Residues 29-53 (YLVLKENVVRQQSANEKLQQRNKLL) are a coiled coil.

Belongs to the FtsB family. Part of a complex composed of FtsB, FtsL and FtsQ.

Its subcellular location is the cell inner membrane. In terms of biological role, essential cell division protein. May link together the upstream cell division proteins, which are predominantly cytoplasmic, with the downstream cell division proteins, which are predominantly periplasmic. The chain is Cell division protein FtsB from Colwellia psychrerythraea (strain 34H / ATCC BAA-681) (Vibrio psychroerythus).